The sequence spans 344 residues: UDP-N-acetylenolpyruvoylglucosamine reductase (344 aa).

Residues 17-187 (VDYACSELIS…TGVGIKLAKK (171 aa)) enclose the FAD-binding PCMH-type domain. The active site involves R163. The active-site Proton donor is S233. E329 is a catalytic residue.

The protein belongs to the MurB family. Requires FAD as cofactor.

It is found in the cytoplasm. It catalyses the reaction UDP-N-acetyl-alpha-D-muramate + NADP(+) = UDP-N-acetyl-3-O-(1-carboxyvinyl)-alpha-D-glucosamine + NADPH + H(+). The protein operates within cell wall biogenesis; peptidoglycan biosynthesis. In terms of biological role, cell wall formation. The sequence is that of UDP-N-acetylenolpyruvoylglucosamine reductase from Shewanella sediminis (strain HAW-EB3).